An 819-amino-acid chain; its full sequence is Pentatricopeptide repeat-containing protein At1g52620 (819 aa).

18 PPR repeats span residues 98-132 (NGFA…NVKL), 133-163 (THEA…VVEL), 169-203 (DVIA…GDSV), 204-238 (DNYS…GCIP), 239-273 (NIVF…GFMP), 274-308 (TLET…GLRV), 309-343 (SVWF…DCKP), 344-378 (DVAT…GLIP), 379-413 (NNLS…GCKP), 414-448 (DIVT…GVSP), 449-483 (DAAI…NILP), 484-518 (DAYV…GVKV), 519-553 (DVVH…HLVP), 554-588 (DKFT…KCKP), 589-623 (NVVT…DLVP), 624-659 (NVVT…KCVP), 709-743 (HAAA…GFSP), and 744-779 (DPVS…GLEV).

Belongs to the PPR family. P subfamily.

The protein is Pentatricopeptide repeat-containing protein At1g52620 of Arabidopsis thaliana (Mouse-ear cress).